Consider the following 157-residue polypeptide: Large ribosomal subunit protein uL15 (157 aa).

A disordered region spans residues 1-41 (MKLHELSDNPGATKKRKRVGRGPGSGTGKMGGRGIKGQKSR). The span at 21–35 (RGPGSGTGKMGGRGI) shows a compositional bias: gly residues.

Belongs to the universal ribosomal protein uL15 family. Part of the 50S ribosomal subunit.

In terms of biological role, binds to the 23S rRNA. The sequence is that of Large ribosomal subunit protein uL15 from Jannaschia sp. (strain CCS1).